The sequence spans 408 residues: uncharacterized protein (408 aa).

Disordered stretches follow at residues 184 to 206 (DENN…SILF) and 254 to 317 (NNKT…SSDS). Residues 187-206 (NNNSNNNNNNNSNNNSSILF) show a composition bias toward low complexity.

This is an uncharacterized protein from Dictyostelium discoideum (Social amoeba).